Consider the following 671-residue polypeptide: DNA ligase (671 aa).

NAD(+) is bound by residues 38-42 (DKEFD), 87-88 (SL), and Glu113. The active-site N6-AMP-lysine intermediate is the Lys115. NAD(+)-binding residues include Arg136, Glu170, Lys282, and Lys306. Residues Cys396, Cys399, Cys414, and Cys419 each coordinate Zn(2+). The 86-residue stretch at 586 to 671 (SDLQPFVGQS…LLKQEGIAID (86 aa)) folds into the BRCT domain.

The protein belongs to the NAD-dependent DNA ligase family. LigA subfamily. It depends on Mg(2+) as a cofactor. Mn(2+) is required as a cofactor.

It catalyses the reaction NAD(+) + (deoxyribonucleotide)n-3'-hydroxyl + 5'-phospho-(deoxyribonucleotide)m = (deoxyribonucleotide)n+m + AMP + beta-nicotinamide D-nucleotide.. Functionally, DNA ligase that catalyzes the formation of phosphodiester linkages between 5'-phosphoryl and 3'-hydroxyl groups in double-stranded DNA using NAD as a coenzyme and as the energy source for the reaction. It is essential for DNA replication and repair of damaged DNA. The sequence is that of DNA ligase from Leptospira biflexa serovar Patoc (strain Patoc 1 / Ames).